Here is a 689-residue protein sequence, read N- to C-terminus: Glycine--tRNA ligase beta subunit (689 aa).

Belongs to the class-II aminoacyl-tRNA synthetase family. Tetramer of two alpha and two beta subunits.

It is found in the cytoplasm. It catalyses the reaction tRNA(Gly) + glycine + ATP = glycyl-tRNA(Gly) + AMP + diphosphate. This Pseudoalteromonas translucida (strain TAC 125) protein is Glycine--tRNA ligase beta subunit.